Reading from the N-terminus, the 234-residue chain is Adenosine 5'-phosphosulfate reductase (234 aa).

Positions 120, 121, 203, and 206 each coordinate [4Fe-4S] cluster. C229 acts as the Nucleophile; cysteine thiosulfonate intermediate in catalysis.

It belongs to the PAPS reductase family. CysH subfamily. The cofactor is [4Fe-4S] cluster.

The protein resides in the cytoplasm. It carries out the reaction [thioredoxin]-disulfide + sulfite + AMP + 2 H(+) = adenosine 5'-phosphosulfate + [thioredoxin]-dithiol. The protein operates within sulfur metabolism; hydrogen sulfide biosynthesis; sulfite from sulfate. Its function is as follows. Catalyzes the formation of sulfite from adenosine 5'-phosphosulfate (APS) using thioredoxin as an electron donor. The protein is Adenosine 5'-phosphosulfate reductase of Bacillus cytotoxicus (strain DSM 22905 / CIP 110041 / 391-98 / NVH 391-98).